Here is a 344-residue protein sequence, read N- to C-terminus: Unsaturated rhamnogalacturonyl hydrolase YesR (344 aa).

Substrate-binding positions include 30 to 31 (DW), N74, and 118 to 128 (QHTVNAAEYVF). D135 (proton donor) is an active-site residue. Residues 198 to 202 (RANGW) and 308 to 309 (NA) contribute to the substrate site.

It belongs to the glycosyl hydrolase 105 family. In terms of assembly, monomer.

The protein resides in the cytoplasm. It catalyses the reaction 2-O-(4-deoxy-beta-L-threo-hex-4-enopyranuronosyl)-alpha-L-rhamnose + H2O = 5-dehydro-4-deoxy-D-glucuronate + L-rhamnopyranose. Functionally, catalyzes the hydrolysis of unsaturated rhamnogalacturonan disaccharide to yield unsaturated D-galacturonic acid and L-rhamnose. It cannot act on unsaturated glucuronyl hydrolase (UGL) substrates containing unsaturated D-glucuronic acid at the non-reducing terminus, although the active pockets of YesR and UGL are very similar. The chain is Unsaturated rhamnogalacturonyl hydrolase YesR (yesR) from Bacillus subtilis (strain 168).